A 470-amino-acid chain; its full sequence is MDTTMEADLGATGHRPRTELDDEDSYPQGGWDTVFLVALLLLGLPANGLMAWLAGSQARHGAGTRLALLLLSLALSDFLFLAAAAFQILEIRHGGHWPLGTAACRFYYFLWGVSYSSGLFLLAALSLDRCLLALCPHWYPGHRPVRLPLWVCAGVWVLATLFSVPWLVFPEAAVWWYDLVICLDFWDSEELSLRMLEVLGGFLPFLLLLVCHVLTQATACRTCHRQQQPAACRGFARVARTILSAYVVLRLPYQLAQLLYLAFLWDVYSGYLLWEALVYSDYLILLNSCLSPFLCLMASADLRTLLRSVLSSFAAALCEERPGSFTPTEPQTQLDSEGPTLPEPMAEAQSQMDPVAQPQVNPTLQPRSDPTAQPQLNPTAQPQSDPTAQPQLNLMAQPQSDSVAQPQADTNVQTPAPAASSVPSPCDEASPTPSSHPTPGALEDPATPPASEGESPSSTPPEAAPGAGPT.

Positions 1-25 (MDTTMEADLGATGHRPRTELDDEDS) are disordered. Over 1 to 33 (MDTTMEADLGATGHRPRTELDDEDSYPQGGWDT) the chain is Extracellular. A helical transmembrane segment spans residues 34-54 (VFLVALLLLGLPANGLMAWLA). Over 55–65 (GSQARHGAGTR) the chain is Cytoplasmic. A helical membrane pass occupies residues 66-86 (LALLLLSLALSDFLFLAAAAF). At 87–105 (QILEIRHGGHWPLGTAACR) the chain is on the extracellular side. C104 and C182 are oxidised to a cystine. A helical membrane pass occupies residues 106 to 126 (FYYFLWGVSYSSGLFLLAALS). Residues 127-148 (LDRCLLALCPHWYPGHRPVRLP) are Cytoplasmic-facing. Residues 149–169 (LWVCAGVWVLATLFSVPWLVF) form a helical membrane-spanning segment. Residues 170–194 (PEAAVWWYDLVICLDFWDSEELSLR) lie on the Extracellular side of the membrane. The chain crosses the membrane as a helical span at residues 195–215 (MLEVLGGFLPFLLLLVCHVLT). Residues 216–257 (QATACRTCHRQQQPAACRGFARVARTILSAYVVLRLPYQLAQ) lie on the Cytoplasmic side of the membrane. A helical membrane pass occupies residues 258-278 (LLYLAFLWDVYSGYLLWEALV). Residues 279–281 (YSD) lie on the Extracellular side of the membrane. The chain crosses the membrane as a helical span at residues 282–302 (YLILLNSCLSPFLCLMASADL). Residues 303-470 (RTLLRSVLSS…PEAAPGAGPT (168 aa)) are Cytoplasmic-facing. The segment at 322–470 (PGSFTPTEPQ…PEAAPGAGPT (149 aa)) is disordered. 2 stretches are compositionally biased toward polar residues: residues 325-335 (FTPTEPQTQLD) and 348-414 (AQSQ…NVQT). Positions 415–425 (PAPAASSVPSP) are enriched in low complexity.

The protein belongs to the G-protein coupled receptor 1 family.

It localises to the cell membrane. Its function is as follows. Orphan receptor. The polypeptide is Probable G-protein coupled receptor 152 (GPR152) (Homo sapiens (Human)).